A 209-amino-acid polypeptide reads, in one-letter code: Orotate phosphoribosyltransferase (209 aa).

5-phospho-alpha-D-ribose 1-diphosphate contacts are provided by residues arginine 96, lysine 100, histidine 102, and 122–130 (EDLISTGGS). Residue serine 126 participates in orotate binding.

The protein belongs to the purine/pyrimidine phosphoribosyltransferase family. PyrE subfamily. Homodimer. The cofactor is Mg(2+).

It carries out the reaction orotidine 5'-phosphate + diphosphate = orotate + 5-phospho-alpha-D-ribose 1-diphosphate. The protein operates within pyrimidine metabolism; UMP biosynthesis via de novo pathway; UMP from orotate: step 1/2. Catalyzes the transfer of a ribosyl phosphate group from 5-phosphoribose 1-diphosphate to orotate, leading to the formation of orotidine monophosphate (OMP). In Streptococcus pyogenes serotype M5 (strain Manfredo), this protein is Orotate phosphoribosyltransferase.